We begin with the raw amino-acid sequence, 487 residues long: Homeobox protein homothorax (487 aa).

3 disordered regions span residues 25–49, 210–292, and 333–369; these read YDPHAGHRPPGLQGLPSHHSPHMTH, DTTK…SSLN, and NFGTSASGDASNASIGSGEGTGEEDDDASGKKNQKKR. The region spanning 127–211 is the MEIS N-terminal domain; it reads GGDVCSSESF…IDLVIDERDT (85 aa). Composition is skewed to polar residues over residues 227–237 and 333–345; these read NADSTSHTDGA and NFGTSASGDASNA. The segment at residues 365–427 is a DNA-binding region (homeobox; TALE-type); it reads NQKKRGIFPK…NARRRIVQPM (63 aa).

This sequence belongs to the TALE/MEIS homeobox family. Interacts with exd; required for nuclear translocation of exd. In terms of tissue distribution, in the wing disk, the expression is present in the regions corresponding to notum, wing hinge and ventral pleura. In the leg disk, the expression is in the periphery region, corresponding to the proximal segments of the legs. In the antennal disk, the expression is in all but the arista region. In the eye disk, the expression is strong in the anterior region surrounding the eye field, including the regions corresponding to ptilinum, ocellus and head capsules, and weak in the posterior and lateral margins of the eye disk. Expressed specifically in maturating inner photoreceptors of the DRA and maintained through adulthood.

It localises to the nucleus. Functionally, all isoforms are required for patterning of the embryonic cuticle. Acts with exd to delimit the eye field and prevent inappropriate eye development. Isoforms that carry the homeodomain are required for proper localization of chordotonal organs within the peripheral nervous system and antennal identity; required to activate antennal-specific genes, such as sal and to repress the leg-like expression of dac. Necessary for the nuclear localization of the essential HOX cofactor, extradenticle (exd). Both necessary and sufficient for inner photoreceptors to adopt the polarization-sensitive 'dorsal rim area' (DRA) of the eye fate instead of the color-sensitive default state. This occurs by increasing rhabdomere size and uncoupling R7-R8 communication to allow both cells to express the same opsin rather than different ones as required for color vision. This is Homeobox protein homothorax from Drosophila melanogaster (Fruit fly).